The chain runs to 346 residues: Queuosine 5'-phosphate N-glycosylase/hydrolase (346 aa).

Queuine contacts are provided by His49, Phe243, Asp245, Asp310, and Asp315. Asp245 (nucleophile or transition state stabilizer) is an active-site residue.

Belongs to the QNG1 protein family.

The catalysed reaction is queuosine 5'-phosphate + H2O = queuine + D-ribose 5-phosphate. Its function is as follows. Catalyzes the hydrolysis of queuosine 5'-phosphate, releasing the nucleobase queuine (q). Is required for salvage of queuine from exogenous queuosine (Q) that is imported and then converted to queuosine 5'-phosphate intracellularly. The sequence is that of Queuosine 5'-phosphate N-glycosylase/hydrolase from Schizosaccharomyces pombe (strain 972 / ATCC 24843) (Fission yeast).